Consider the following 509-residue polypeptide: Dihydrolipoyl dehydrogenase, mitochondrial (509 aa).

The N-terminal 35 residues, 1 to 35 (MQSWSRVYCSLVKRGHFSRISHGLQGVSVVPLRTY), are a transit peptide targeting the mitochondrion. At Lys66 the chain carries N6-acetyllysine; alternate. An N6-succinyllysine; alternate modification is found at Lys66. FAD-binding positions include 71 to 80 (EKNETLGGTC) and Lys89. Cys80 and Cys85 form a disulfide bridge. N6-acetyllysine; alternate is present on residues Lys104, Lys122, Lys132, and Lys143. N6-succinyllysine; alternate occurs at positions 104, 122, 132, and 143. Position 154 (Gly154) interacts with FAD. Residues Lys159 and Lys166 each carry the N6-succinyllysine modification. Residue 183–185 (TGS) participates in FAD binding. Residues 220–227 (GAGVIGVE) and Glu243 contribute to the NAD(+) site. Residues Lys273 and Lys277 each carry the N6-succinyllysine modification. An NAD(+)-binding site is contributed by Val278. A phosphoserine mark is found at Ser285 and Ser297. Gly314 lines the NAD(+) pocket. N6-acetyllysine is present on Lys346. Residues Asp355 and 361–364 (MLAH) contribute to the FAD site. Residue Lys410 is modified to N6-acetyllysine; alternate. Residue Lys410 is modified to N6-succinyllysine; alternate. 2 positions are modified to N6-acetyllysine: Lys417 and Lys420. Lys430 is modified (N6-succinyllysine). His487 serves as the catalytic Proton acceptor. At Lys505 the chain carries N6-acetyllysine; alternate. The residue at position 505 (Lys505) is an N6-succinyllysine; alternate.

Belongs to the class-I pyridine nucleotide-disulfide oxidoreductase family. As to quaternary structure, homodimer. Part of the multimeric pyruvate dehydrogenase complex that contains multiple copies of pyruvate dehydrogenase (subunits PDHA (PDHA1 or PDHA2) and PDHB, E1), dihydrolipoamide acetyltransferase (DLAT, E2) and lipoamide dehydrogenase (DLD, E3). These subunits are bound to an inner core composed of about 48 DLAT and 12 PDHX molecules (by non covalent bonds). The 2-oxoglutarate dehydrogenase complex is composed of OGDH (2-oxoglutarate dehydrogenase; E1), DLST (dihydrolipoamide succinyltransferase; E2), DLD (dihydrolipoamide dehydrogenase; E3) and the assembly factor KGD4. It contains multiple copies of the three enzymatic components (E1, E2 and E3). In the nucleus, the 2-oxoglutarate dehydrogenase complex associates with KAT2A. Interacts with PDHX. FAD serves as cofactor. In terms of processing, tyrosine phosphorylated.

Its subcellular location is the mitochondrion matrix. It localises to the nucleus. The protein localises to the cell projection. It is found in the cilium. The protein resides in the flagellum. Its subcellular location is the cytoplasmic vesicle. It localises to the secretory vesicle. The protein localises to the acrosome. It carries out the reaction N(6)-[(R)-dihydrolipoyl]-L-lysyl-[protein] + NAD(+) = N(6)-[(R)-lipoyl]-L-lysyl-[protein] + NADH + H(+). In terms of biological role, lipoamide dehydrogenase is a component of the glycine cleavage system as well as an E3 component of three alpha-ketoacid dehydrogenase complexes (pyruvate-, alpha-ketoglutarate-, and branched-chain amino acid-dehydrogenase complex). The 2-oxoglutarate dehydrogenase complex is mainly active in the mitochondrion. A fraction of the 2-oxoglutarate dehydrogenase complex also localizes in the nucleus and is required for lysine succinylation of histones: associates with KAT2A on chromatin and provides succinyl-CoA to histone succinyltransferase KAT2A. In monomeric form may have additional moonlighting function as serine protease. Involved in the hyperactivation of spermatazoa during capacitation and in the spermatazoal acrosome reaction. In Bos taurus (Bovine), this protein is Dihydrolipoyl dehydrogenase, mitochondrial (DLD).